The chain runs to 146 residues: Transmembrane protein 207 (146 aa).

The N-terminal stretch at 1-29 is a signal peptide; that stretch reads MSRSRLFSVTSAISTIGILCLPLFQLVLS. The helical transmembrane segment at 52–72 threads the bilayer; sequence IWILLLLVLVAALLCGAVVLC.

Interacts with WWOX. Expressed in some signet-ring cell carcinoma, especially those showing high invasion and metastatic activity (at protein level).

The protein localises to the membrane. This chain is Transmembrane protein 207 (TMEM207), found in Homo sapiens (Human).